Consider the following 182-residue polypeptide: NADH-quinone oxidoreductase subunit I (182 aa).

2 consecutive 4Fe-4S ferredoxin-type domains span residues 50-82 (IILSRDPDGDERCVACNLCAVACPVGCISLQKA) and 92-121 (EFFRINFSRCIFCGLCEEACPTTAIQMTPD). Cysteine 62, cysteine 65, cysteine 68, cysteine 72, cysteine 101, cysteine 104, cysteine 107, and cysteine 111 together coordinate [4Fe-4S] cluster.

This sequence belongs to the complex I 23 kDa subunit family. In terms of assembly, NDH-1 is composed of 14 different subunits. Subunits NuoA, H, J, K, L, M, N constitute the membrane sector of the complex. The cofactor is [4Fe-4S] cluster.

The protein localises to the cell inner membrane. The catalysed reaction is a quinone + NADH + 5 H(+)(in) = a quinol + NAD(+) + 4 H(+)(out). In terms of biological role, NDH-1 shuttles electrons from NADH, via FMN and iron-sulfur (Fe-S) centers, to quinones in the respiratory chain. The immediate electron acceptor for the enzyme in this species is believed to be ubiquinone. Couples the redox reaction to proton translocation (for every two electrons transferred, four hydrogen ions are translocated across the cytoplasmic membrane), and thus conserves the redox energy in a proton gradient. This is NADH-quinone oxidoreductase subunit I from Psychrobacter cryohalolentis (strain ATCC BAA-1226 / DSM 17306 / VKM B-2378 / K5).